Reading from the N-terminus, the 252-residue chain is Flap endonuclease Xni (252 aa).

Residue D103 coordinates Mg(2+). Residues 159–248 (VLPEQLPDYW…LKGNLQQLRL (90 aa)) form the 5'-3' exonuclease domain. Residues L170, A171, P179, I181, and I184 each coordinate K(+). The segment at 183-188 (GIGPKT) is interaction with DNA.

Belongs to the Xni family. Mg(2+) is required as a cofactor. It depends on K(+) as a cofactor.

Has flap endonuclease activity. During DNA replication, flap endonucleases cleave the 5'-overhanging flap structure that is generated by displacement synthesis when DNA polymerase encounters the 5'-end of a downstream Okazaki fragment. In Photorhabdus laumondii subsp. laumondii (strain DSM 15139 / CIP 105565 / TT01) (Photorhabdus luminescens subsp. laumondii), this protein is Flap endonuclease Xni.